Reading from the N-terminus, the 162-residue chain is NADH-quinone oxidoreductase subunit C (162 aa).

This sequence belongs to the complex I 30 kDa subunit family. NDH-1 is composed of 14 different subunits. Subunits NuoB, C, D, E, F, and G constitute the peripheral sector of the complex.

Its subcellular location is the cell inner membrane. The catalysed reaction is a quinone + NADH + 5 H(+)(in) = a quinol + NAD(+) + 4 H(+)(out). Its function is as follows. NDH-1 shuttles electrons from NADH, via FMN and iron-sulfur (Fe-S) centers, to quinones in the respiratory chain. The immediate electron acceptor for the enzyme in this species is believed to be ubiquinone. Couples the redox reaction to proton translocation (for every two electrons transferred, four hydrogen ions are translocated across the cytoplasmic membrane), and thus conserves the redox energy in a proton gradient. The chain is NADH-quinone oxidoreductase subunit C from Geobacter sulfurreducens (strain ATCC 51573 / DSM 12127 / PCA).